We begin with the raw amino-acid sequence, 220 residues long: Charged multivesicular body protein 2a (220 aa).

Coiled coils occupy residues 12–53 and 198–219; these read EELL…MAKQ and EATA…NLRR. Positions 196–220 are disordered; sequence KGEATAALADADADLEERLNNLRRD. The MIT-interacting motif signature appears at 208 to 218; the sequence is ADLEERLNNLR. The segment covering 211-220 has biased composition (basic and acidic residues); it reads EERLNNLRRD.

This sequence belongs to the SNF7 family. As to quaternary structure, probable core component of the endosomal sorting required for transport complex III (ESCRT-III). ESCRT-III components are thought to multimerize to form a flat lattice on the perimeter membrane of the endosome.

The protein resides in the late endosome membrane. It is found in the cytoplasm. Probable core component of the endosomal sorting required for transport complex III (ESCRT-III) which is involved in multivesicular bodies (MVBs) formation and sorting of endosomal cargo proteins into MVBs. MVBs contain intraluminal vesicles (ILVs) that are generated by invagination and scission from the limiting membrane of the endosome and mostly are delivered to lysosomes enabling degradation of membrane proteins, such as stimulated growth factor receptors, lysosomal enzymes and lipids. This Xenopus laevis (African clawed frog) protein is Charged multivesicular body protein 2a (chmp2a).